Consider the following 434-residue polypeptide: Chaperone SurA (434 aa).

Positions 1–29 are cleaved as a signal peptide; that stretch reads MKTLRLNFRSAILKALGALLLLQGCLAHA. PpiC domains lie at 180-281 and 290-389; these read AEEY…AMLE and VEQS…QVQD.

It is found in the periplasm. It carries out the reaction [protein]-peptidylproline (omega=180) = [protein]-peptidylproline (omega=0). Functionally, chaperone involved in the correct folding and assembly of outer membrane proteins. Recognizes specific patterns of aromatic residues and the orientation of their side chains, which are found more frequently in integral outer membrane proteins. May act in both early periplasmic and late outer membrane-associated steps of protein maturation. This is Chaperone SurA from Hahella chejuensis (strain KCTC 2396).